The primary structure comprises 208 residues: Large ribosomal subunit protein uL4 (208 aa).

The disordered stretch occupies residues 49–78 (KAKGISDISGTTAKPYRQKHTGRARQGSLR).

This sequence belongs to the universal ribosomal protein uL4 family. Part of the 50S ribosomal subunit.

Its function is as follows. One of the primary rRNA binding proteins, this protein initially binds near the 5'-end of the 23S rRNA. It is important during the early stages of 50S assembly. It makes multiple contacts with different domains of the 23S rRNA in the assembled 50S subunit and ribosome. Functionally, forms part of the polypeptide exit tunnel. This Anaplasma phagocytophilum (strain HZ) protein is Large ribosomal subunit protein uL4.